A 94-amino-acid chain; its full sequence is Co-chaperonin GroES (94 aa).

It belongs to the GroES chaperonin family. In terms of assembly, heptamer of 7 subunits arranged in a ring. Interacts with the chaperonin GroEL.

Its subcellular location is the cytoplasm. Its function is as follows. Together with the chaperonin GroEL, plays an essential role in assisting protein folding. The GroEL-GroES system forms a nano-cage that allows encapsulation of the non-native substrate proteins and provides a physical environment optimized to promote and accelerate protein folding. GroES binds to the apical surface of the GroEL ring, thereby capping the opening of the GroEL channel. In Parageobacillus thermoglucosidasius (Geobacillus thermoglucosidasius), this protein is Co-chaperonin GroES.